Consider the following 639-residue polypeptide: uncharacterized protein (639 aa).

The first 16 residues, 1-16 (MLTLYLFTATCCFVCA), serve as a signal peptide directing secretion. Disordered regions lie at residues 80–128 (RRRA…SDKL) and 432–488 (QTAT…TSRT). Composition is skewed to polar residues over residues 108 to 122 (TYAT…TASP) and 432 to 446 (QTAT…QQQP). Basic and acidic residues predominate over residues 465–480 (HGDEPHSDGELRRESH).

This is an uncharacterized protein from Human cytomegalovirus (strain Merlin) (HHV-5).